We begin with the raw amino-acid sequence, 358 residues long: MKFILIDQAPELPIEFLPKGDCYRKGRLFGPKGEEIENTTDCDLLQDARRAAEAHRRARYKVQSIIRPGITLLEIVRSIEDSTRTLLEGERNNGIGFPAGMSMNSCAAHYTVNPGEEDIVLKEDDVLKVDFGTHSNGRIMDSAFTVAFQENLQPLLMAAREGTETGIRSLGIDARVCDIGRDINEVITSYEVEIEGKTWPIRPVSDLHGHSISQFKIHGGISIPAVNNRDTTRIKGDTFYAVETFATTGKGFINDRSPCSHFMLNVHKSRKLFNKDLIKVYEFVKSSFGTLPFSPRHLDHYNLVEGGSLKSVNLLTMMGLFTPYPPLNDIDGSKVAQFEHTVYLSENGKEILTRGDDY.

His109 lines the substrate pocket. The a divalent metal cation site is built by Asp130, Asp141, and His210. Residue His218 participates in substrate binding. Glu243 and Glu339 together coordinate a divalent metal cation.

It belongs to the peptidase M24A family. Methionine aminopeptidase eukaryotic type 2 subfamily. Co(2+) is required as a cofactor. It depends on Zn(2+) as a cofactor. Requires Mn(2+) as cofactor. The cofactor is Fe(2+).

It is found in the cytoplasm. The enzyme catalyses Release of N-terminal amino acids, preferentially methionine, from peptides and arylamides.. Functionally, cotranslationally removes the N-terminal methionine from nascent proteins. The N-terminal methionine is often cleaved when the second residue in the primary sequence is small and uncharged (Met-Ala-, Cys, Gly, Pro, Ser, Thr, or Val). In Encephalitozoon intestinalis (strain ATCC 50506) (Microsporidian parasite), this protein is Methionine aminopeptidase 2.